The following is a 205-amino-acid chain: Meiotic nuclear division protein 1 homolog (205 aa).

The residue at position 2 (Ser2) is an N-acetylserine. Residues 83–173 adopt a coiled-coil conformation; that stretch reads KRKLEALNSQ…EAANRWTDNI (91 aa).

The protein belongs to the MND1 family. Heterodimer with PSMC3IP/HOP2. MND1-PSMC3IP interacts with DMC1 and RAD51 and binds to ssDNA and dsDNA showing no preference for either form of DNA.

It localises to the nucleus. Its function is as follows. Required for proper homologous chromosome pairing and efficient cross-over and intragenic recombination during meiosis. Stimulates both DMC1- and RAD51-mediated homologous strand assimilation, which is required for the resolution of meiotic double-strand breaks. This is Meiotic nuclear division protein 1 homolog from Mus musculus (Mouse).